Consider the following 409-residue polypeptide: UV excision repair protein RAD23 homolog B (409 aa).

The Ubiquitin-like domain maps to 1-79 (MQVTLKTLQQ…VVVMVTKPKA (79 aa)). A disordered region spans residues 80–175 (VSTPAPATTQ…STSGDSSRSN (96 aa)). Positions 81-143 (STPAPATTQQ…SSEPAPASAA (63 aa)) are enriched in low complexity. Residues 144 to 153 (KQEKPAEKPA) are compositionally biased toward basic and acidic residues. T155 carries the post-translational modification Phosphothreonine. A Phosphoserine modification is found at S160. Residues 160-175 (SPTATDSTSGDSSRSN) show a composition bias toward polar residues. The residue at position 164 (T164) is a Phosphothreonine. Phosphoserine is present on S174. T186 carries the post-translational modification Phosphothreonine. The 41-residue stretch at 188–228 (QSYENMVTEIMSMGYEREQVIAALRASFNNPDRAVEYLLMG) folds into the UBA 1 domain. S199 carries the phosphoserine modification. Y202 is modified (phosphotyrosine). A disordered region spans residues 236–276 (QAVVDPPQAASTGAPQSSAVAAAAATTTATTTTTSSGGHPL). Residues 252–271 (SSAVAAAAATTTATTTTTSS) are compositionally biased toward low complexity. One can recognise an STI1 domain in the interval 274–317 (HPLEFLRNQPQFQQMRQIIQQNPSLLPALLQQIGRENPQLLQQI). Residues 364 to 404 (PQEKEAIERLKALGFPEGLVIQAYFACEKNENLAANFLLQQ) enclose the UBA 2 domain.

It belongs to the RAD23 family. In terms of assembly, component of the XPC complex composed of XPC, RAD23B and CETN2. Interacts with NGLY1 and PSMC1. Interacts with ATXN3. Interacts with PSMD4 and PSMC5. Interacts with AMFR. Interacts with VCP; the interaction is indirect and mediated by NGLY1.

The protein localises to the nucleus. Its subcellular location is the cytoplasm. Functionally, multiubiquitin chain receptor involved in modulation of proteasomal degradation. Binds to polyubiquitin chains. Proposed to be capable to bind simultaneously to the 26S proteasome and to polyubiquitinated substrates and to deliver ubiquitinated proteins to the proteasome. May play a role in endoplasmic reticulum-associated degradation (ERAD) of misfolded glycoproteins by association with PNGase and delivering deglycosylated proteins to the proteasome. In terms of biological role, involved in global genome nucleotide excision repair (GG-NER) by acting as component of the XPC complex. Cooperatively with CETN2 appears to stabilize XPC. May protect XPC from proteasomal degradation. The XPC complex is proposed to represent the first factor bound at the sites of DNA damage and together with other core recognition factors, XPA, RPA and the TFIIH complex, is part of the pre-incision (or initial recognition) complex. The XPC complex recognizes a wide spectrum of damaged DNA characterized by distortions of the DNA helix such as single-stranded loops, mismatched bubbles or single-stranded overhangs. The orientation of XPC complex binding appears to be crucial for inducing a productive NER. XPC complex is proposed to recognize and to interact with unpaired bases on the undamaged DNA strand which is followed by recruitment of the TFIIH complex and subsequent scanning for lesions in the opposite strand in a 5'-to-3' direction by the NER machinery. Cyclobutane pyrimidine dimers (CPDs) which are formed upon UV-induced DNA damage esacpe detection by the XPC complex due to a low degree of structural perurbation. Instead they are detected by the UV-DDB complex which in turn recruits and cooperates with the XPC complex in the respective DNA repair. In vitro, the XPC:RAD23B dimer is sufficient to initiate NER; it preferentially binds to cisplatin and UV-damaged double-stranded DNA and also binds to a variety of chemically and structurally diverse DNA adducts. XPC:RAD23B contacts DNA both 5' and 3' of a cisplatin lesion with a preference for the 5' side. XPC:RAD23B induces a bend in DNA upon binding. XPC:RAD23B stimulates the activity of DNA glycosylases TDG and SMUG1. The protein is UV excision repair protein RAD23 homolog B (RAD23B) of Homo sapiens (Human).